The primary structure comprises 334 residues: Trans-3-hydroxy-L-proline dehydratase (334 aa).

Cys91 serves as the catalytic Proton acceptor. Residues 92-93, Asp250, and 255-256 contribute to the substrate site; these read GH and GT.

This sequence belongs to the proline racemase family.

It catalyses the reaction trans-3-hydroxy-L-proline = 1-pyrroline-2-carboxylate + H2O. Its function is as follows. Catalyzes the dehydration of trans-3-hydroxy-L-proline (t3LHyp) to Delta(1)-pyrroline-2-carboxylate (Pyr2C). Is likely involved in a degradation pathway that converts t3LHyp to L-proline. Can also catalyze the epimerization of trans-4-hydroxy-L-proline (t4LHyp) to cis-4-hydroxy-D-proline (c4DHyp) in vitro. Displays no proline racemase activity. This is Trans-3-hydroxy-L-proline dehydratase from Bacillus thuringiensis subsp. konkukian (strain 97-27).